The chain runs to 115 residues: Small ribosomal subunit protein uS17 (115 aa).

It belongs to the universal ribosomal protein uS17 family. In terms of assembly, part of the 30S ribosomal subunit.

Functionally, one of the primary rRNA binding proteins, it binds specifically to the 5'-end of 16S ribosomal RNA. This Granulibacter bethesdensis (strain ATCC BAA-1260 / CGDNIH1) protein is Small ribosomal subunit protein uS17.